Here is a 239-residue protein sequence, read N- to C-terminus: Serine protease SplF (239 aa).

Residues 1–36 (MNKNIIIKSIAALTILTSVTGVGTTMVEGIQQTAKA) form the signal peptide. Active-site charge relay system residues include H75, D114, and S192.

Belongs to the peptidase S1B family.

Its subcellular location is the secreted. The protein is Serine protease SplF (splF) of Staphylococcus aureus (strain Mu50 / ATCC 700699).